Here is a 101-residue protein sequence, read N- to C-terminus: Large ribosomal subunit protein bL9m (101 aa).

Residues 1-32 constitute a mitochondrion transit peptide; the sequence is MSIMKPTTRFFRFNSLELAVSPFQRIYGQLRF.

Belongs to the bacterial ribosomal protein bL9 family. As to quaternary structure, component of the mitochondrial large ribosomal subunit (mt-LSU). Mature yeast 74S mitochondrial ribosomes consist of a small (37S) and a large (54S) subunit. The 37S small subunit contains a 15S ribosomal RNA (15S mt-rRNA) and at least 32 different proteins. The 54S large subunit contains a 21S rRNA (21S mt-rRNA) and at least 45 different proteins.

It localises to the mitochondrion. In terms of biological role, component of the mitochondrial ribosome (mitoribosome), a dedicated translation machinery responsible for the synthesis of mitochondrial genome-encoded proteins, including at least some of the essential transmembrane subunits of the mitochondrial respiratory chain. The mitoribosomes are attached to the mitochondrial inner membrane and translation products are cotranslationally integrated into the membrane. The chain is Large ribosomal subunit protein bL9m from Schizosaccharomyces pombe (strain 972 / ATCC 24843) (Fission yeast).